A 165-amino-acid polypeptide reads, in one-letter code: Ribosome maturation factor RimM (165 aa).

Residues 94-165 (EDEFYIADLN…YVILNYQTKV (72 aa)) form the PRC barrel domain.

This sequence belongs to the RimM family. Binds ribosomal protein uS19.

Its subcellular location is the cytoplasm. An accessory protein needed during the final step in the assembly of 30S ribosomal subunit, possibly for assembly of the head region. Essential for efficient processing of 16S rRNA. May be needed both before and after RbfA during the maturation of 16S rRNA. It has affinity for free ribosomal 30S subunits but not for 70S ribosomes. This is Ribosome maturation factor RimM from Rickettsia typhi (strain ATCC VR-144 / Wilmington).